The sequence spans 343 residues: Ribosomal RNA small subunit methyltransferase C (343 aa).

It belongs to the methyltransferase superfamily. RsmC family. Monomer.

The protein resides in the cytoplasm. The enzyme catalyses guanosine(1207) in 16S rRNA + S-adenosyl-L-methionine = N(2)-methylguanosine(1207) in 16S rRNA + S-adenosyl-L-homocysteine + H(+). In terms of biological role, specifically methylates the guanine in position 1207 of 16S rRNA in the 30S particle. This Escherichia coli O6:H1 (strain CFT073 / ATCC 700928 / UPEC) protein is Ribosomal RNA small subunit methyltransferase C.